Reading from the N-terminus, the 311-residue chain is HPr kinase/phosphorylase (311 aa).

Catalysis depends on residues His-138 and Lys-159. 153–160 (GKSGVGKS) contacts ATP. Residue Ser-160 participates in Mg(2+) binding. Asp-177 acts as the Proton acceptor; for phosphorylation activity. Proton donor; for dephosphorylation activity in catalysis. Residues 201-210 (LEIRGLGIIN) are important for the catalytic mechanism of both phosphorylation and dephosphorylation. Glu-202 contacts Mg(2+). The active site involves Arg-243. Residues 264 to 269 (PVRPGR) are important for the catalytic mechanism of dephosphorylation.

It belongs to the HPrK/P family. Homohexamer. Requires Mg(2+) as cofactor.

The catalysed reaction is [HPr protein]-L-serine + ATP = [HPr protein]-O-phospho-L-serine + ADP + H(+). It catalyses the reaction [HPr protein]-O-phospho-L-serine + phosphate + H(+) = [HPr protein]-L-serine + diphosphate. In terms of biological role, catalyzes the ATP- as well as the pyrophosphate-dependent phosphorylation of a specific serine residue in HPr, a phosphocarrier protein of the phosphoenolpyruvate-dependent sugar phosphotransferase system (PTS). HprK/P also catalyzes the pyrophosphate-producing, inorganic phosphate-dependent dephosphorylation (phosphorolysis) of seryl-phosphorylated HPr (P-Ser-HPr). The two antagonistic activities of HprK/P are regulated by several intracellular metabolites, which change their concentration in response to the absence or presence of rapidly metabolisable carbon sources (glucose, fructose, etc.) in the growth medium. Also phosphorylates/dephosphorylates the HPr-like catabolite repression protein crh on a specific serine residue. Therefore, by controlling the phosphorylation state of HPr and crh, HPrK/P is a sensor enzyme that plays a major role in the regulation of carbon metabolism and sugar transport: it mediates carbon catabolite repression (CCR), and regulates PTS-catalyzed carbohydrate uptake and inducer exclusion. The protein is HPr kinase/phosphorylase of Geobacillus kaustophilus (strain HTA426).